The following is a 547-amino-acid chain: Membrane protein insertase YidC (547 aa).

6 consecutive transmembrane segments (helical) span residues Leu-6 to Tyr-26, Val-328 to Ile-348, Leu-351 to Phe-371, Leu-425 to Val-445, Leu-459 to Gln-479, and Pro-499 to Val-519.

This sequence belongs to the OXA1/ALB3/YidC family. Type 1 subfamily. In terms of assembly, interacts with the Sec translocase complex via SecD. Specifically interacts with transmembrane segments of nascent integral membrane proteins during membrane integration.

It localises to the cell inner membrane. Required for the insertion and/or proper folding and/or complex formation of integral membrane proteins into the membrane. Involved in integration of membrane proteins that insert both dependently and independently of the Sec translocase complex, as well as at least some lipoproteins. Aids folding of multispanning membrane proteins. The protein is Membrane protein insertase YidC of Dechloromonas aromatica (strain RCB).